The sequence spans 175 residues: Inorganic pyrophosphatase (175 aa).

Residues lysine 30, arginine 44, and tyrosine 56 each contribute to the substrate site. Positions 66, 71, and 103 each coordinate Mg(2+). Substrate is bound at residue tyrosine 142.

The protein belongs to the PPase family. Homohexamer. Mg(2+) serves as cofactor.

It is found in the cytoplasm. The catalysed reaction is diphosphate + H2O = 2 phosphate + H(+). Catalyzes the hydrolysis of inorganic pyrophosphate (PPi) forming two phosphate ions. This chain is Inorganic pyrophosphatase, found in Buchnera aphidicola subsp. Baizongia pistaciae (strain Bp).